A 318-amino-acid chain; its full sequence is tRNA U34 carboxymethyltransferase (318 aa).

Carboxy-S-adenosyl-L-methionine contacts are provided by residues Lys88, Trp102, Lys107, Gly126, 176–177, Met192, Tyr196, and Arg311; that span reads LE.

It belongs to the class I-like SAM-binding methyltransferase superfamily. CmoB family. Homotetramer.

The catalysed reaction is carboxy-S-adenosyl-L-methionine + 5-hydroxyuridine(34) in tRNA = 5-carboxymethoxyuridine(34) in tRNA + S-adenosyl-L-homocysteine + H(+). In terms of biological role, catalyzes carboxymethyl transfer from carboxy-S-adenosyl-L-methionine (Cx-SAM) to 5-hydroxyuridine (ho5U) to form 5-carboxymethoxyuridine (cmo5U) at position 34 in tRNAs. This chain is tRNA U34 carboxymethyltransferase, found in Pseudomonas putida (strain W619).